The primary structure comprises 396 residues: DNA polymerase IV (396 aa).

Positions 6 to 186 constitute a UmuC domain; the sequence is IIHVDMDAFY…LPISRLWGVG (181 aa). Mg(2+) is bound by residues D10 and D104. Residue E105 is part of the active site.

It belongs to the DNA polymerase type-Y family. As to quaternary structure, monomer. Requires Mg(2+) as cofactor.

It is found in the cytoplasm. It catalyses the reaction DNA(n) + a 2'-deoxyribonucleoside 5'-triphosphate = DNA(n+1) + diphosphate. Its function is as follows. Poorly processive, error-prone DNA polymerase involved in untargeted mutagenesis. Copies undamaged DNA at stalled replication forks, which arise in vivo from mismatched or misaligned primer ends. These misaligned primers can be extended by PolIV. Exhibits no 3'-5' exonuclease (proofreading) activity. May be involved in translesional synthesis, in conjunction with the beta clamp from PolIII. This is DNA polymerase IV from Desulfatibacillum aliphaticivorans.